We begin with the raw amino-acid sequence, 424 residues long: Poly-cysteine and histidine-tailed protein (424 aa).

Residues 1–17 form the signal peptide; that stretch reads MAFSTIVVLFVAAVGFG. Asn-291 is a glycosylation site (N-linked (GlcNAc...) asparagine). Positions 372-390 are enriched in basic and acidic residues; sequence VGGKKQQKDQPESEKKAEN. Positions 372 to 424 are disordered; sequence VGGKKQQKDQPESEKKAENMPETTGNASHHQHRHHHGDSSSESHEQHHHHHHH. Asn-397 carries an N-linked (GlcNAc...) asparagine glycan.

Glycosylated. Expressed in larval tissues like cuticle, hypodermis and muscle (at protein level). Note=Not excreted into striated muscle fibers or nurse cell.

Its subcellular location is the secreted. In terms of biological role, binds iron and zinc. May bind nickel. The protein is Poly-cysteine and histidine-tailed protein of Trichinella spiralis (Trichina worm).